Consider the following 664-residue polypeptide: DNA ligase (664 aa).

Residues 31–35, 80–81, and glutamate 110 each bind NAD(+); these read DYEFD and SL. The active-site N6-AMP-lysine intermediate is the lysine 112. Residues arginine 133 and glutamate 169 each coordinate NAD(+). A BRCT 1 domain is found at 237 to 257; it reads LEKARKWGFKVPAESELKDSI. NAD(+) is bound by residues lysine 284 and lysine 308. Positions 402, 405, 420, and 426 each coordinate Zn(2+). The 79-residue stretch at 586-664 folds into the BRCT 2 domain; sequence NQTNILEGNT…SEEDFLKMLE (79 aa).

Belongs to the NAD-dependent DNA ligase family. LigA subfamily. The cofactor is Mg(2+). Mn(2+) serves as cofactor.

It carries out the reaction NAD(+) + (deoxyribonucleotide)n-3'-hydroxyl + 5'-phospho-(deoxyribonucleotide)m = (deoxyribonucleotide)n+m + AMP + beta-nicotinamide D-nucleotide.. Its function is as follows. DNA ligase that catalyzes the formation of phosphodiester linkages between 5'-phosphoryl and 3'-hydroxyl groups in double-stranded DNA using NAD as a coenzyme and as the energy source for the reaction. It is essential for DNA replication and repair of damaged DNA. In Christiangramia forsetii (strain DSM 17595 / CGMCC 1.15422 / KT0803) (Gramella forsetii), this protein is DNA ligase.